Consider the following 223-residue polypeptide: Protein Mis18-alpha (223 aa).

The disordered stretch occupies residues 1–30 (MAGTFSLEPCSTSSSCNHQGKRSESSLLEK). The span at 9–18 (PCSTSSSCNH) shows a compositional bias: polar residues. Residues 21-30 (KRSESSLLEK) show a composition bias toward basic and acidic residues. A phosphoserine mark is found at Ser33, Ser36, and Ser37. The 99-residue stretch at 71–169 (PLVFLCTRCR…SVEAVESYTL (99 aa)) folds into the Mis18 domain. 4 residues coordinate Zn(2+): Cys76, Cys79, Cys132, and Cys135. Residue Lys153 forms a Glycyl lysine isopeptide (Lys-Gly) (interchain with G-Cter in SUMO2) linkage. At Ser223 the chain carries Phosphoserine.

The protein belongs to the mis18 family. In terms of assembly, homodimer, and heterodimer with OIP5/MIS18B. Identified in a complex containing MIS18A, OIP5/MIS18B, MIS18BP1, RBBP7 and RBBP4.

It is found in the nucleus. It localises to the chromosome. Its subcellular location is the centromere. Functionally, required for recruitment of CENPA to centromeres and normal chromosome segregation during mitosis. The protein is Protein Mis18-alpha (Mis18a) of Rattus norvegicus (Rat).